A 214-amino-acid chain; its full sequence is Holliday junction branch migration complex subunit RuvA (214 aa).

The segment at 1-63 (MISFLRGPVA…EDSMTLYGFA (63 aa)) is domain I. A domain II region spans residues 64–139 (DPDEREVFEI…KLVPHGTVNG (76 aa)). Positions 139–143 (GAPAS) are flexible linker. A domain III region spans residues 144–214 (PSAQWKPQVV…SAGRQVTARG (71 aa)).

This sequence belongs to the RuvA family. Homotetramer. Forms an RuvA(8)-RuvB(12)-Holliday junction (HJ) complex. HJ DNA is sandwiched between 2 RuvA tetramers; dsDNA enters through RuvA and exits via RuvB. An RuvB hexamer assembles on each DNA strand where it exits the tetramer. Each RuvB hexamer is contacted by two RuvA subunits (via domain III) on 2 adjacent RuvB subunits; this complex drives branch migration. In the full resolvosome a probable DNA-RuvA(4)-RuvB(12)-RuvC(2) complex forms which resolves the HJ.

It is found in the cytoplasm. Its function is as follows. The RuvA-RuvB-RuvC complex processes Holliday junction (HJ) DNA during genetic recombination and DNA repair, while the RuvA-RuvB complex plays an important role in the rescue of blocked DNA replication forks via replication fork reversal (RFR). RuvA specifically binds to HJ cruciform DNA, conferring on it an open structure. The RuvB hexamer acts as an ATP-dependent pump, pulling dsDNA into and through the RuvAB complex. HJ branch migration allows RuvC to scan DNA until it finds its consensus sequence, where it cleaves and resolves the cruciform DNA. The protein is Holliday junction branch migration complex subunit RuvA of Renibacterium salmoninarum (strain ATCC 33209 / DSM 20767 / JCM 11484 / NBRC 15589 / NCIMB 2235).